Here is a 1035-residue protein sequence, read N- to C-terminus: NACHT, LRR and PYD domains-containing protein 3 (1035 aa).

Residues 1-93 enclose the Pyrin domain; the sequence is MKMMSVRCKL…WEKAKKDQPE (93 aa). Serine 5 bears the Phosphoserine mark. Cysteine 8 and cysteine 106 are disulfide-bonded. Residue tyrosine 13 is modified to Phosphotyrosine. The S-palmitoyl cysteine moiety is linked to residue cysteine 128. A required for binding to phosphatidylinositol 4-phosphate (PtdIns4P) region spans residues 129-132; that stretch reads KKKK. Tyrosine 134 and tyrosine 138 each carry phosphotyrosine. Residues 138-208 form the FISNA domain; that stretch reads YRRHVRSRFY…SSLKLELLFE (71 aa). Residue serine 159 is modified to Phosphoserine. Tyrosine 166 carries the phosphotyrosine modification. Position 167 (threonine 167) interacts with ATP. Position 199 is a phosphoserine (serine 199). The NACHT domain occupies 218–534; that stretch reads HTVVFQGAAG…EFFAAMYYLL (317 aa). 224–231 is an ATP binding site; the sequence is GAAGIGKT. Serine 263 and serine 293 each carry phosphoserine. Lysine 322 is covalently cross-linked (Glycyl lysine isopeptide (Lys-Gly) (interchain with G-Cter in ubiquitin)). Position 332 is a phosphoserine (serine 332). The KFERQ-like motif 1 signature appears at 353-357; sequence LEKLQ. Residue lysine 428 forms a Glycyl lysine isopeptide (Lys-Gly) (interchain with G-Cter in ubiquitin) linkage. Histidine 520 provides a ligand contact to ATP. Positions 603–607 match the KFERQ-like motif 2 motif; that stretch reads QVRLE. Lysine 689 participates in a covalent cross-link: Glycyl lysine isopeptide (Lys-Gly) (interchain with G-Cter in ubiquitin). Residues serine 727 and serine 734 each carry the phosphoserine modification. LRR repeat units lie at residues 741–761, 770–791, 798–818, 827–848, and 855–875; these read SLTELDLSDNTLGDPGMRVLC, NIQRLWLGRCGLTHQCCFNISS, KLVELDLSDNALGDFGVRLLC, NLQKLWLVSCCLTSACCQDLAL, and SLTRLYIGENALGDSGVQVLC. The KFERQ-like motif 3 signature appears at 797 to 801; that stretch reads QKLVE. Phosphoserine is present on serine 805. Residues cysteine 836, cysteine 837, and cysteine 843 are each lipidated (S-palmitoyl cysteine). Tyrosine 860 is subject to Phosphotyrosine. Lysine 877 participates in a covalent cross-link: Glycyl lysine isopeptide (Lys-Gly) (interchain with G-Cter in ubiquitin). LRR repeat units follow at residues 884-905, 912-932, 941-962, and 969-990; these read NLQKLGLVNSGLTSLCCSALTS, NLTHLYLRSNALGDMGLKLLC, KLQMLELDNCSLTSHSCWDLST, and SLRKLNLSNNDLGDLCVVTLCE. The S-palmitoyl cysteine moiety is linked to residue cysteine 957. Lysine 972 is covalently cross-linked (Glycyl lysine isopeptide (Lys-Gly) (interchain with G-Cter in ubiquitin)). The short motif at 990-994 is the KFERQ-like motif 4 element; the sequence is EVLKQ. Serine 1034 is modified (phosphoserine).

This sequence belongs to the NLRP family. In terms of assembly, sensor component of NLRP3 inflammasomes; inflammasomes are supramolecular complexes that assemble in the cytosol in response to pathogens and other damage-associated signals and play critical roles in innate immunity and inflammation. The core of NLRP3 inflammasomes consists of a signal sensor component (NLRP3), an adapter (PYCARD/ASC), which recruits an effector pro-inflammatory caspase (CASP1 and, possibly, CASP4 and CASP5). Homodecamer; inactive NLRP3 forms homodecameric double-ring cages that hide pyrin domains within NACHT-LRR rings to avoid premature activation. Interacts (via pyrin domain) with PYCARD/ASC (via pyrin domain); interaction is direct. Interacts (via LRR repeat domain) with NEK7 (via N-terminus); the interaction is required for the formation of the complex NLRP3:PYCARD, oligomerization of PYCARD/ASC and activation of CASP1. Interacts (via LRR repeat domain) with NR4A1/Nur77 (via N-terminus); the interaction is direct, requires activation of NR4A1 by its ligands NBRE-containing dsDNA and lipopolysaccharide, and stimulates the association of NLRP3 with NEK7 for non-canonical NLRP3 inflammasome activation. Interacts with CARD8; leading to inhibit formation of the NLRP3 inflammasome. Interacts with MEFV; this interaction targets NLRP3 to degradation by autophagy, hence preventing excessive IL1B- and IL18-mediated inflammation. Interacts with EIF2AK2/PKR; this interaction requires EIF2AK2 activity, is accompanied by EIF2AK2 autophosphorylation and promotes inflammasome assembly in response to specific stimuli. Interacts with GBP5 (via DAPIN domain); this interaction promotes inflammasome assembly in response to microbial and soluble, but not crystalline, agents. Interacts with PML (isoform PML-1) (via the leucine-rich repeat (LRR) domain); PML-mediated increase in NLRP3 inflammasome activation does not depend upon this interaction. Interacts (via NACHT domain) with DHX33 (via DEAH box); NLRP3 activation in presence of cytosolic dsRNA is mediated by DHX33. Interacts (via NACHT and LRR domains) with ARRB2; this interaction is direct and inducible by polyunsaturated fatty acids (PUFAs). Interacts (via NACHT domain) with DDX3X under both LPS-primed and inflammasome-activating conditions. Interacts with IRF4 (via the LRR domain); this interaction is direct and is required for optimal IRF4 binding to IL4 promoter and efficient IL4 transactivation during differentiation of Th2 helper T-cells. Interacts with MAVS; promoting localization to mitochondria and activation of the NLRP3 inflammasome. Interacts with MARK4; promoting localization of NLRP3 to the microtubule organizing center (MTOC). Interacts with TRIM50; this interaction also promotes NLRP3 oligomerization and subsequent inflammasome activation. Interacts with IRGM; preventing NLRP3 inflammasome assembly and promoting NLRP3 degradation. Interacts (via NACHT and LLR domains) with ABHD8; this interaction is enhanced in the presence of NLRP3 inflammasome inducers, such as ATP, nigericin, silica, or alum. Interaction with ABHD8 leads the recruitment of ZDHHC12, hence facilitating NLRP3 palmitoylation and degradation by the chaperone-mediated autophagy pathway (CMA), therefore attenuating NLRP3 inflammasome activation. Phosphorylation by MAPK8/JNK1 increases inflammasome activation by promoting deubiquitination by BRCC3 and NLRP3 homooligomerization. Phosphorylation at Ser-805 by CSNK1A1 prevents inflammasome activation by preventing NEK7 recruitment. Phosphorylation at Ser-5 in the pyrin domain inhibits homomultimerization of NLRP3 and activation of the NLRP3 inflammasome: dephosphorylation by protein phosphatase 2A (PP2A) promotes assembly of the NLRP3 inflammasome. Phosphorylation at Ser-293 by PKD/PRKD1 promotes NLRP3 inflammasome assembly. Phosphorylation by ERK1/MAPK3 promotes NLRP3 inflammasome assembly. Phosphorylation by BTK (at Tyr-134, Tyr-138 and Tyr-166) in the region that mediates binding to phosphatidylinositol phosphate, promotes relocalization of NLRP3 and assembly of the NLRP3 inflammasome. Phosphorylation at Tyr-860 inhibits NLRP3 inflammasome assembly: dephosphorylation by PTPN22 promotes inflammasome activation. Phosphorylated by LATS1 and LATS2 at Ser-263 following palmitoylation by ZDHHC1, promoting its relocalization to the microtubule organizing center (MTOC), where NLRP3 is activated by NEK7, leading to inflammasome assembly and activation. Post-translationally, ubiquitinated; undergoes both 'Lys-48'- and 'Lys-63'-linked polyubiquitination. Ubiquitination does not lead to degradation, but inhibits inflammasome activation. Deubiquitination is catalyzed by BRCC3 and associated with NLRP3 activation and inflammasome assembly. This process can be induced by the activation of Toll-like receptors (by LPS), through a non-transcriptional pathway dependent on the mitochondrial production of reactive oxygen species, and by ATP. Ubiquitinated by TRIM31 via 'Lys-48'-linked ubiquitination, leading to its degradation by the proteasome. Ubiquitinated at Lys-689 by the SCF(FBXL2) complex, leading to its degradation by the proteasome. Ubiquitinated by TRIM35 via 'lys-48' and 'Lys-63'-linked ubiquitination leading to inhibition of NLRP3 inflammasome activation. Undergoes 'Lys-27'-linked polyubiquitination by MARCHF5, leading to NLRP3-NEK7 complex formation and NLRP3 oligomerization. In terms of processing, the disulfide bond in the pyrin domain might play a role in reactive oxygen species-mediated activation. Palmitoylation by ZDHHC12 promotes NLRP3 degradation by the chaperone-mediated autophagy pathway (CMA) and therefore limits NLRP3 inflammasome activation. Interaction with ZDHHC12, and hence NLRP3 palmitoylation, is greatly enhanced by ABHD8. Following palmitoylation, HSPA8/HSC70 recognizes and binds the KFERQ-like motifs on NLRP3 and promotes NLRP3 recruitment to lysosomes, where it is degraded via the chaperone-mediated autophagy pathway in a LAMP2-dependent process. Palmitoylation at Cys-836 and Cys-837 by ZDHHC5 enhances its binding to NEK7 leading to inflammasome assembly and activation. Palmitoylation at Cys-128 and Cys-957 by ZDHHC1 facilitates phosphorylation at Ser-263 by LATS1 and LATS2, promoting its relocalization to the microtubule organizing center (MTOC), where NLRP3 is activated by NEK7, leading to inflammasome assembly and activation. Depalmitoylated by ABHD17A. Post-translationally, degraded via selective autophagy following interaction with IRGM. IRGM promotes NLRP3 recruitment to autophagosome membranes, promoting its SQSTM1/p62-dependent autophagy-dependent degradation.

It is found in the cytoplasm. The protein resides in the cytosol. Its subcellular location is the inflammasome. The protein localises to the cytoskeleton. It localises to the microtubule organizing center. It is found in the golgi apparatus membrane. The protein resides in the endoplasmic reticulum. Its subcellular location is the mitochondrion. The protein localises to the secreted. It localises to the nucleus. It carries out the reaction ATP + H2O = ADP + phosphate + H(+). Its activity is regulated as follows. Under resting conditions, NLRP3 binds ADP and is autoinhibited. Inactive NLRP3 forms homodecameric double-ring cages that hide pyrin domains within NACHT-LRR rings to avoid premature activation. NLRP3 activation stimuli include extracellular ATP, nigericin, reactive oxygen species, crystals of monosodium urate or cholesterol, amyloid-beta fibers, environmental or industrial particles and nanoparticles, such as asbestos, silica, aluminum salts, cytosolic dsRNA, etc. Almost all stimuli trigger intracellular K(+) efflux. These stimuli lead to membrane perturbations that induce activation of NLRP3. Upon activation, NLRP3 is transported to microtubule organizing center (MTOC), where it is unlocked by NEK7, leading to its relocalization to dispersed trans-Golgi network (dTGN) vesicle membranes and recruitment of PYCARD/ASC for the formation of an active inflammasome complex. NEK7-activated NLRP3 forms a disk-shaped inflammasome. NLRP3 and PYCARD/ASC interact via their respective pyrin domains; interaction initiates speck formation (nucleation) which greatly enhances further addition of soluble PYCARD/ASC molecules to the speck in a prion-like polymerization process. Clustered PYCARD/ASC nucleates the formation of CASP1 filaments through the interaction of their respective CARD domains, acting as a platform for CASP1 polymerization and activation. Active CASP1 then processes IL1B and IL18 precursors, leading to the release of mature cytokines in the extracellular milieu and inflammatory response. NLRP3 inflammasome assembly is inhibited by IRGM, which impedes NLRP3 oligomerization. NLRP3 inflammasome is inhibited by cyclic AMP (cAMP), which directly binds NLRP3; inhibition is relieved by calcium-sensing receptor CASR, which inhibits production of cAMP. Specifically inhibited by sulfonylurea MCC950 (also named CP-456,773, CRID3), a potent and specific small-molecule inhibitor of the NLRP3 inflammasome that acts by preventing ATP hydrolysis. Functionally, sensor component of the NLRP3 inflammasome, which mediates inflammasome activation in response to defects in membrane integrity, leading to secretion of inflammatory cytokines IL1B and IL18 and pyroptosis. In response to pathogens and other damage-associated signals that affect the integrity of membranes, initiates the formation of the inflammasome polymeric complex composed of NLRP3, CASP1 and PYCARD/ASC. Recruitment of pro-caspase-1 (proCASP1) to the NLRP3 inflammasome promotes caspase-1 (CASP1) activation, which subsequently cleaves and activates inflammatory cytokines IL1B and IL18 and gasdermin-D (GSDMD), promoting cytokine secretion and pyroptosis. Activation of NLRP3 inflammasome is also required for HMGB1 secretion; stimulating inflammatory responses. Under resting conditions, ADP-bound NLRP3 is autoinhibited. NLRP3 activation stimuli include extracellular ATP, nigericin, reactive oxygen species, crystals of monosodium urate or cholesterol, amyloid-beta fibers, environmental or industrial particles and nanoparticles, such as asbestos, silica, aluminum salts, cytosolic dsRNA, etc. Almost all stimuli trigger intracellular K(+) efflux. These stimuli lead to membrane perturbation and activation of NLRP3. Upon activation, NLRP3 is transported to microtubule organizing center (MTOC), where it is unlocked by NEK7, leading to its relocalization to dispersed trans-Golgi network (dTGN) vesicle membranes and formation of an active inflammasome complex. Associates with dTGN vesicle membranes by binding to phosphatidylinositol 4-phosphate (PtdIns4P). Shows ATPase activity. Independently of inflammasome activation, regulates the differentiation of T helper 2 (Th2) cells and has a role in Th2 cell-dependent asthma and tumor growth. During Th2 differentiation, required for optimal IRF4 binding to IL4 promoter and for IRF4-dependent IL4 transcription. Binds to the consensus DNA sequence 5'-GRRGGNRGAG-3'. May also participate in the transcription of IL5, IL13, GATA3, CCR3, CCR4 and MAF. This chain is NACHT, LRR and PYD domains-containing protein 3, found in Rattus norvegicus (Rat).